The primary structure comprises 90 residues: Probable oxaloacetate decarboxylase gamma chain 2 (90 aa).

The helical transmembrane segment at 10–32 threads the bilayer; sequence GINLLTLGMGFVFIFLIFLVYAT.

The protein belongs to the OadG family. In terms of assembly, heterotrimer of an alpha, a beta and a gamma subunit. Na(+) is required as a cofactor.

The protein localises to the cell membrane. The catalysed reaction is oxaloacetate + 2 Na(+)(in) + H(+) = pyruvate + 2 Na(+)(out) + CO2. In terms of biological role, catalyzes the decarboxylation of oxaloacetate coupled to Na(+) translocation. The sequence is that of Probable oxaloacetate decarboxylase gamma chain 2 (oadG2) from Vibrio cholerae serotype O1 (strain ATCC 39315 / El Tor Inaba N16961).